Consider the following 122-residue polypeptide: MIQPQTHLNVADNSGARELMCIRIIGTSNRRYAHIGDVIVAVIKEVVPNMPLERSEVIRAVIVRTCKELKRDNGMIIRYDDNAAVIIDQEGNPKGTRIFGAIVRELRQLNFTKIVSLAPEVL.

Belongs to the universal ribosomal protein uL14 family. Part of the 50S ribosomal subunit.

Its subcellular location is the plastid. The protein resides in the chloroplast. Its function is as follows. Binds to 23S rRNA. This Vitis vinifera (Grape) protein is Large ribosomal subunit protein uL14c.